Consider the following 144-residue polypeptide: Large ribosomal subunit protein uL16 (144 aa).

Belongs to the universal ribosomal protein uL16 family. Part of the 50S ribosomal subunit.

Binds 23S rRNA and is also seen to make contacts with the A and possibly P site tRNAs. This chain is Large ribosomal subunit protein uL16, found in Acidobacterium capsulatum (strain ATCC 51196 / DSM 11244 / BCRC 80197 / JCM 7670 / NBRC 15755 / NCIMB 13165 / 161).